The following is a 369-amino-acid chain: Chaperone protein DnaJ (369 aa).

The region spanning 4–69 is the J domain; sequence SYYEILEVEK…KKRALYDRYG (66 aa). A CR-type zinc finger spans residues 130–207; it reads GCKKTIKAQY…CKGKTYILKD (78 aa). Zn(2+) contacts are provided by C143, C146, C159, C162, C181, C184, C195, and C198. CXXCXGXG motif repeat units lie at residues 143–150, 159–166, 181–188, and 195–202; these read CESCDGTG, CKQCNGQG, CGACQGKG, and CQACKGKT.

This sequence belongs to the DnaJ family. In terms of assembly, homodimer. The cofactor is Zn(2+).

It localises to the cytoplasm. Functionally, participates actively in the response to hyperosmotic and heat shock by preventing the aggregation of stress-denatured proteins and by disaggregating proteins, also in an autonomous, DnaK-independent fashion. Unfolded proteins bind initially to DnaJ; upon interaction with the DnaJ-bound protein, DnaK hydrolyzes its bound ATP, resulting in the formation of a stable complex. GrpE releases ADP from DnaK; ATP binding to DnaK triggers the release of the substrate protein, thus completing the reaction cycle. Several rounds of ATP-dependent interactions between DnaJ, DnaK and GrpE are required for fully efficient folding. Also involved, together with DnaK and GrpE, in the DNA replication of plasmids through activation of initiation proteins. The protein is Chaperone protein DnaJ of Helicobacter pylori (strain J99 / ATCC 700824) (Campylobacter pylori J99).